Here is a 30-residue protein sequence, read N- to C-terminus: Large ribosomal subunit protein bL25 (30 aa).

This sequence belongs to the bacterial ribosomal protein bL25 family. Part of the 50S ribosomal subunit; part of the 5S rRNA/L5/L18/L25 subcomplex. Contacts the 5S rRNA. Binds to the 5S rRNA independently of L5 and L18.

This is one of the proteins that binds to the 5S RNA in the ribosome where it forms part of the central protuberance. The chain is Large ribosomal subunit protein bL25 (rplY) from Anabaena variabilis.